A 142-amino-acid polypeptide reads, in one-letter code: Peptide methionine sulfoxide reductase MsrB (142 aa).

One can recognise a MsrB domain in the interval 2 to 125 (IKKDKNELNE…NSAAIQFIPY (124 aa)). Residue C114 is the Nucleophile of the active site.

This sequence belongs to the MsrB Met sulfoxide reductase family.

It carries out the reaction L-methionyl-[protein] + [thioredoxin]-disulfide + H2O = L-methionyl-(R)-S-oxide-[protein] + [thioredoxin]-dithiol. This chain is Peptide methionine sulfoxide reductase MsrB, found in Staphylococcus haemolyticus (strain JCSC1435).